Here is a 98-residue protein sequence, read N- to C-terminus: MIAMPTLLSADQRQTLPATLPHWTVHEQSISRELVFNDFNEAFGFMSRVALLAEGRNHHPNWSNVYNRVSITLSTHDLGGLSDLDVELAAAIDQLLPA.

This sequence belongs to the pterin-4-alpha-carbinolamine dehydratase family.

It catalyses the reaction (4aS,6R)-4a-hydroxy-L-erythro-5,6,7,8-tetrahydrobiopterin = (6R)-L-erythro-6,7-dihydrobiopterin + H2O. The polypeptide is Putative pterin-4-alpha-carbinolamine dehydratase (Parasynechococcus marenigrum (strain WH8102)).